The following is a 476-amino-acid chain: MGCSAATFILVALFGSSSWMGTNSVWMQLPLLTSELPEQWNLPSYLAGVVQIACIVPLIYTILHKGVKSFTIPTAPLIIALLSLACCCQLGLSFFWSDYSEIFGAPRSWPLYSLLFGLAIVNAMSNVLFMPFMAQFHPAYLNAYFVGMGLSSLAPSLLSLAQGTSMFKCDEKGVAERFPPNFSVSIFFFVIFSFTCVALFAFIALYRSGAHTHFATPNKKEPNEGTPLKKDLNNTSSSRKGDDEDESPIEIHETGAPAIDAIVSELDVTFREELQKSFRDANYLERSAMINDDSEPHPVDYITGVKFTFLLFTTALVNAQMNGIITSVQSYAALPYSQATYHFAVTLSNVVSPLSSFLPFFISVRSIPVLAILTACSTAMTAFIVYLAALSPNLIFNSVTIGSALSIGGSLIAAGLHSYLRVVFASLLREGHQSESRLFWCGVFIQIGSFIGSAVMFPLVNIAHLFTSAPQCKSIS.

Residues 1–21 (MGCSAATFILVALFGSSSWMG) traverse the membrane as a helical segment. At 22 to 41 (TNSVWMQLPLLTSELPEQWN) the chain is on the cytoplasmic side. The helical transmembrane segment at 42 to 62 (LPSYLAGVVQIACIVPLIYTI) threads the bilayer. The Extracellular portion of the chain corresponds to 63–75 (LHKGVKSFTIPTA). Residues 76–96 (PLIIALLSLACCCQLGLSFFW) form a helical membrane-spanning segment. The Cytoplasmic segment spans residues 97–113 (SDYSEIFGAPRSWPLYS). The helical transmembrane segment at 114 to 134 (LLFGLAIVNAMSNVLFMPFMA) threads the bilayer. Topologically, residues 135 to 140 (QFHPAY) are extracellular. The helical transmembrane segment at 141–161 (LNAYFVGMGLSSLAPSLLSLA) threads the bilayer. Residues 162–185 (QGTSMFKCDEKGVAERFPPNFSVS) lie on the Cytoplasmic side of the membrane. A helical membrane pass occupies residues 186-206 (IFFFVIFSFTCVALFAFIALY). Residues 207 to 306 (RSGAHTHFAT…HPVDYITGVK (100 aa)) lie on the Extracellular side of the membrane. The interval 215-249 (ATPNKKEPNEGTPLKKDLNNTSSSRKGDDEDESPI) is disordered. The span at 218-232 (NKKEPNEGTPLKKDL) shows a compositional bias: basic and acidic residues. Asn-233 carries N-linked (GlcNAc...) asparagine glycosylation. The helical transmembrane segment at 307–327 (FTFLLFTTALVNAQMNGIITS) threads the bilayer. The Cytoplasmic segment spans residues 328–342 (VQSYAALPYSQATYH). A helical membrane pass occupies residues 343 to 363 (FAVTLSNVVSPLSSFLPFFIS). Residues 364–366 (VRS) are Extracellular-facing. A helical transmembrane segment spans residues 367–387 (IPVLAILTACSTAMTAFIVYL). The Cytoplasmic portion of the chain corresponds to 388 to 393 (AALSPN). A helical transmembrane segment spans residues 394–414 (LIFNSVTIGSALSIGGSLIAA). At 415–437 (GLHSYLRVVFASLLREGHQSESR) the chain is on the extracellular side. The chain crosses the membrane as a helical span at residues 438 to 458 (LFWCGVFIQIGSFIGSAVMFP). The Cytoplasmic portion of the chain corresponds to 459–476 (LVNIAHLFTSAPQCKSIS).

This sequence belongs to the riboflavin transporter family. Expressed in intestine and pharynx.

The protein resides in the cell membrane. The enzyme catalyses riboflavin(in) = riboflavin(out). In terms of biological role, riboflavin transporter. This chain is Riboflavin transporter rft-2, found in Caenorhabditis elegans.